Consider the following 241-residue polypeptide: uncharacterized protein (241 aa).

Disordered stretches follow at residues Glu19–Gly59, Val101–Ser139, and Arg152–Ser182. Residues Ala34–Ser48 are compositionally biased toward gly residues. Over residues Pro49 to Leu58 the composition is skewed to polar residues. Residues Pro106–Pro118 show a composition bias toward pro residues.

This is an uncharacterized protein from Homo sapiens (Human).